The primary structure comprises 615 residues: Dehydrogenase str4 (615 aa).

FAD-binding positions include 45–46, 66–67, and 123–126; these read TA, EA, and NGSM. Residue H552 is the Proton acceptor of the active site. FAD contacts are provided by residues A585 and 596–597; that span reads PA.

This sequence belongs to the GMC oxidoreductase family. Homodimer. The cofactor is FAD.

It participates in mycotoxin biosynthesis. Its function is as follows. Dehydrogenase; part of the gene cluster that mediates the biosynthesis of strobilurin A, an antifungal polyketide that contains a key beta-methoxyacrylate toxophore that targets the complex III of the mitochondrial electron transport chain. Strobilurin biosynthesis begins with construction of benzoyl CoA by step-wise elimination of ammonia from phenylalanine by the phenylalanine ammonia-lyase str11, oxygenation by str8 and retro-Claisen reaction to form benzoic acid, which is activated to its CoA thiolester benzoyl CoA by the dedicated CoA ligase str10. Benzoyl CoA forms the starter unit for the highly reducing polyketide synthase stpks1 that produces the polyketide prestrobilutin A. The FAD-dependent oxygenase str9 then catalyzes the key oxidative rearrangement responsible for the creation of the beta-methoxyacrylate toxophore. Str9 performs epoxidation of the 2,3 olefin of prestrobilutin A, followed by Meinwald rearrangement to furnish the aldehyde intermediate. Rapid enolization of the aldehyde intermediate would give the beta-methoxyacrylate skeleton and methylations catalyzed by str2 and str3 complete the synthesis and lead to the production of strobilurin A. The short-chain dehydrogenase stl2 and the dehydrogenase str4 play a role in the shunt pathway leading to the production of bolineol. The cluster encodes no obvious halogenase gene that could be involved in production of strobilurin B, nor any obvious dimethylallyl-transferase that could be involved in the production of strobilurin G. It is possible that unknown proteins encoded in, or near, the cluster (such as str1 or stl1) may form new classes of halogenases or dimethylally-transferases, or that the responsible genes are located elsewhere on the genome. Similarly, proteins encoded by str5/str6 hydrolases appear to have no chemical role in the biosynthesis of strobilurin A. Finally, no obvious self-resistance gene is found within the cluster. The polypeptide is Dehydrogenase str4 (Strobilurus tenacellus).